Here is a 123-residue protein sequence, read N- to C-terminus: Fluoride-specific ion channel FluC 2 (123 aa).

2 consecutive transmembrane segments (helical) span residues 1–21 (MTML…FLLD) and 30–50 (VPVP…LGLI). G74 and T77 together coordinate Na(+). Residues 99 to 119 (ALHCMGMAIAGVLAAILGLAL) traverse the membrane as a helical segment.

Belongs to the fluoride channel Fluc/FEX (TC 1.A.43) family.

Its subcellular location is the cell membrane. The catalysed reaction is fluoride(in) = fluoride(out). With respect to regulation, na(+) is not transported, but it plays an essential structural role and its presence is essential for fluoride channel function. Functionally, fluoride-specific ion channel. Important for reducing fluoride concentration in the cell, thus reducing its toxicity. This chain is Fluoride-specific ion channel FluC 2, found in Cutibacterium acnes (strain DSM 16379 / KPA171202) (Propionibacterium acnes).